Consider the following 305-residue polypeptide: MVLDGFAAHFDAYLENIVREGKSEHTVAAYRRDLEELFALLAQMPSEAEGGVPQGLSRRDFTAALRRLSQRGLNARTLARKLSSWRQYCVWLVERGLLHTDPTADIKPPKQPERVPKALPQEWLNRMLDLPVDGGDPLAVRDHALFELMYGSGLRVSEIHGLNADDVYLDEAWVHVTGKGRKQRQVPLTGKSVEALKNYLPLRQTASDGKALFTGRNGTRLSQRQIQKRLAQWAAQNGDGRHVSPHMMRHSYAGHLLQASRDIRAVQELLGHSSLSTTQIYTKLDFDHIARLYDEAHPRAKRQDE.

Positions 1–93 (MVLDGFAAHF…SWRQYCVWLV (93 aa)) constitute a Core-binding (CB) domain. One can recognise a Tyr recombinase domain in the interval 114–294 (RVPKALPQEW…DFDHIARLYD (181 aa)). Active-site residues include R155, K179, H246, R249, and H272. The active-site O-(3'-phospho-DNA)-tyrosine intermediate is the Y281.

Belongs to the 'phage' integrase family. XerC subfamily. As to quaternary structure, forms a cyclic heterotetrameric complex composed of two molecules of XerC and two molecules of XerD.

The protein localises to the cytoplasm. In terms of biological role, site-specific tyrosine recombinase, which acts by catalyzing the cutting and rejoining of the recombining DNA molecules. The XerC-XerD complex is essential to convert dimers of the bacterial chromosome into monomers to permit their segregation at cell division. It also contributes to the segregational stability of plasmids. This Neisseria meningitidis serogroup C (strain 053442) protein is Tyrosine recombinase XerC.